The sequence spans 348 residues: EGF-like domain containing protein 1 (348 aa).

A signal peptide spans 1-19 (MFYLSTFMTIVISLSLVSC). The EGF-like domain occupies 60 to 92 (TGSDCKVTCQNNGRCYDGNKCLCSSDYTGHLCE). 3 cysteine pairs are disulfide-bonded: cysteine 64–cysteine 74, cysteine 68–cysteine 80, and cysteine 82–cysteine 91. One can recognise a ZP domain in the interval 99–342 (RCTLDGVVFE…PTCAAPAVSQ (244 aa)).

Prismatic layer of shell (at protein level). Expressed primarily in the mantle with highest level in the mantle edge and lower level in the mantle pallium.

The protein resides in the secreted. The polypeptide is EGF-like domain containing protein 1 (Margaritifera margaritifera (Freshwater pearl mussel)).